The primary structure comprises 658 residues: Ubiquilin-3 (658 aa).

Residues 22–96 form the Ubiquitin-like domain; sequence IRVTVKTPKD…VHLVIKMQRR (75 aa). In terms of domain architecture, STI1 spans 194 to 233; that stretch reads NPHMQHLIQQNPEIGHILNNPEIMRQTMEFLRNPSMMQEM. A compositionally biased stretch (low complexity) spans 280–291; it reads TATTASTTTTSS. Disordered stretches follow at residues 280–336 and 362–478; these read TATT…RNRL and YLQG…PESP. A compositionally biased stretch (gly residues) spans 312 to 323; sequence VSGGRQGRGGRQ. 3 stretches are compositionally biased toward polar residues: residues 362-379, 389-400, and 438-469; these read YLQG…SPLS, SSPKSGSGQSLP, and TGPS…SLMS. The 45-residue stretch at 614-658 folds into the UBA domain; the sequence is QLEAHFRVQLEQLRAMGFLNLEANLQALIATEGDVDAAVEKLRKS.

In terms of tissue distribution, testis-specific (at protein level).

This Mus musculus (Mouse) protein is Ubiquilin-3 (Ubqln3).